The primary structure comprises 196 residues: MGFIIGFLLSVFGYLLGSILFAKIVASYKGIDITSVGSKSAGATNVTRTLGKKYGALVFLLDAFKGFLIAILDRFYIDPSSLWFGIVMVSPVIGHIYSYRSDFKGGKGVATAFGVVFGISPLLALKMFLVWAFVFYLFRYVSLASITSVLVGYFLFLEGDFSTSQKLGATMIAFLILYKHKDNVFRLLRKEEHKFK.

5 helical membrane passes run 1–21 (MGFI…SILF), 53–73 (KYGA…AILD), 76–96 (YIDP…IGHI), 115–135 (VVFG…AFVF), and 141–161 (VSLA…EGDF).

This sequence belongs to the PlsY family. Probably interacts with PlsX.

Its subcellular location is the cell inner membrane. It carries out the reaction an acyl phosphate + sn-glycerol 3-phosphate = a 1-acyl-sn-glycero-3-phosphate + phosphate. Its pathway is lipid metabolism; phospholipid metabolism. Catalyzes the transfer of an acyl group from acyl-phosphate (acyl-PO(4)) to glycerol-3-phosphate (G3P) to form lysophosphatidic acid (LPA). This enzyme utilizes acyl-phosphate as fatty acyl donor, but not acyl-CoA or acyl-ACP. This Hydrogenobaculum sp. (strain Y04AAS1) protein is Glycerol-3-phosphate acyltransferase.